The following is a 299-amino-acid chain: Large ribosomal subunit protein uL29m (299 aa).

It belongs to the universal ribosomal protein uL29 family. As to quaternary structure, component of the mitochondrial large ribosomal subunit. Mature mitochondrial ribosomes consist of a small (37S) and a large (54S) subunit. The 37S subunit contains at least 33 different proteins and 1 molecule of RNA (15S). The 54S subunit contains at least 45 different proteins and 1 molecule of RNA (21S).

It localises to the mitochondrion. In Scheffersomyces stipitis (strain ATCC 58785 / CBS 6054 / NBRC 10063 / NRRL Y-11545) (Yeast), this protein is Large ribosomal subunit protein uL29m (MRPL4).